The primary structure comprises 225 residues: Mitochondrial inner membrane protease ATP23 (225 aa).

H124 provides a ligand contact to a divalent metal cation. Residue E125 is part of the active site. An a divalent metal cation-binding site is contributed by H128.

Belongs to the peptidase M76 family.

It localises to the mitochondrion inner membrane. Has a dual role in the assembly of mitochondrial ATPase. Acts as a protease that removes N-terminal residues of mitochondrial ATPase CF(0) subunit 6 at the intermembrane space side. Also involved in the correct assembly of the membrane-embedded ATPase CF(0) particle, probably mediating association of subunit 6 with the subunit 9 ring. The protein is Mitochondrial inner membrane protease ATP23 (ATP23) of Candida glabrata (strain ATCC 2001 / BCRC 20586 / JCM 3761 / NBRC 0622 / NRRL Y-65 / CBS 138) (Yeast).